Reading from the N-terminus, the 395-residue chain is General transcription factor IIH subunit 2 (395 aa).

The region spanning 60–236 (HLYVVVDGSR…HYKELLTHHV (177 aa)) is the VWFA domain. At tyrosine 95 the chain carries Phosphotyrosine. A C4-type zinc finger spans residues 291 to 308 (CPQCRAKYCELPVECKIC).

It belongs to the GTF2H2 family. In terms of assembly, component of the TFIID-containing RNA polymerase II pre-initiation complex that is composed of TBP and at least GTF2A1, GTF2A2, GTF2E1, GTF2E2, GTF2F1, GTF2H2, GTF2H3, GTF2H4, GTF2H5, GTF2B, TCEA1, ERCC2 and ERCC3. Component of the 7-subunit TFIIH core complex composed of XPB/ERCC3, XPD/ERCC2, GTF2H1, GTF2H2, GTF2H3, GTF2H4 and GTF2H5, which is active in NER. The core complex associates with the 3-subunit CDK-activating kinase (CAK) module composed of CCNH/cyclin H, CDK7 and MNAT1 to form the 10-subunit holoenzyme (holo-TFIIH) active in transcription. Interacts with XPB, XPD, GTF2H1 and GTF2H3. As to quaternary structure, (Microbial infection) Interacts with varicella-zoster virus IE63 protein. Widely expressed, with higher expression in skeletal muscle.

The protein resides in the nucleus. In terms of biological role, component of the general transcription and DNA repair factor IIH (TFIIH) core complex, which is involved in general and transcription-coupled nucleotide excision repair (NER) of damaged DNA and, when complexed to CAK, in RNA transcription by RNA polymerase II. In NER, TFIIH acts by opening DNA around the lesion to allow the excision of the damaged oligonucleotide and its replacement by a new DNA fragment. In transcription, TFIIH has an essential role in transcription initiation. When the pre-initiation complex (PIC) has been established, TFIIH is required for promoter opening and promoter escape. Phosphorylation of the C-terminal tail (CTD) of the largest subunit of RNA polymerase II by the kinase module CAK controls the initiation of transcription. The N-terminus of GTF2H2 interacts with and regulates XPD whereas an intact C-terminus is required for a successful escape of RNAP II form the promoter. This is General transcription factor IIH subunit 2 (GTF2H2) from Homo sapiens (Human).